Consider the following 792-residue polypeptide: MHVIKRDGRQERVMFDKITSRIQKLCYGLNMDFVDPAQITMKVIQGLYSGVTTVELDTLAAETAATLTTKHPDYAILAARIAVSNLHKETKKVFSDVMEDLYNYINPHNGKHSPMVAKSTLDIVLANKDRLNSAIIYDRDFSYNYFGFKTLERSYLLKINGKVAERPQHMLMRVSVGIHKEDIDAAIETYNLLSERWFTHASPTLFNAGTNRPQLSSCFLLSMKDDSIEGIYDTLKQCALISKSAGGIGVAVSCIRATGSYIAGTNGNSNGLVPMLRVYNNTARYVDQGGNKRPGAFAIYLEPWHLDIFEFLDLKKNTGKEEQRARDLFFALWIPDLFMKRVETNQDWSLMCPNECPGLDEVWGEEFEKLYASYEKQGRVRKVVKAQQLWYAIIESQTETGTPYMLYKDSCNRKSNQQNLGTIKCSNLCTEIVEYTSKDEVAVCNLASLALNMYVTSEHTYDFKKLAEVTKVVVRNLNKIIDINYYPVPEACLSNKRHRPIGIGVQGLADAFILMRYPFESAEAQLLNKQIFETIYYGALEASCDLAKEQGPYETYEGSPVSKGILQYDMWNVTPTDLWDWKVLKEKIAKYGIRNSLLIAPMPTASTAQILGNNESIEPYTSNIYTRRVLSGEFQIVNPHLLKDLTERGLWHEEMKNQIIACNGSIQSIPEIPDDLKQLYKTVWEISQKTVLKMAAERGAFIDQSQSLNIHIAEPNYGKLTSMHFYGWKQGLKTGMYYLRTRPAANPIQFTLNKEKLKDKEKVSKEEEEKERNTAAMVCSLENRDECLMCGS.

Positions 1-92 (MHVIKRDGRQ…VSNLHKETKK (92 aa)) constitute an ATP-cone domain. Residues 5–6 (KR), 11–17 (ERVMFDK), Thr53, and Asp57 each bind ATP. An N6-acetyllysine modification is found at Lys17. The GDP site is built by Ser202 and Ser217. A disulfide bridge links Cys218 with Cys444. DTTP contacts are provided by residues 226-228 (DSI), Lys243, Arg256, and 263-264 (AG). The residue at position 376 (Lys376) is an N6-acetyllysine. Residue Asn427 participates in GDP binding. Residue Asn427 is the Proton acceptor of the active site. Catalysis depends on Cys429, which acts as the Cysteine radical intermediate. GDP-binding positions include Glu431 and 604-607 (TAST). The Proton acceptor role is filled by Glu431. Position 751 is a phosphothreonine (Thr751).

The protein belongs to the ribonucleoside diphosphate reductase large chain family. Heterodimer of a large and a small subunit. Heterodimer with small subunit RRM2 or RRM2B. The heterodimer with RRM2 has higher catalytic activity than the heterodimer with RRM2B. Interacts with AHCYL1 which inhibits its activity.

The protein localises to the cytoplasm. It catalyses the reaction a 2'-deoxyribonucleoside 5'-diphosphate + [thioredoxin]-disulfide + H2O = a ribonucleoside 5'-diphosphate + [thioredoxin]-dithiol. With respect to regulation, under complex allosteric control mediated by deoxynucleoside triphosphates and ATP binding to separate specificity and activation sites on the M1 subunit. The type of nucleotide bound at the specificity site determines substrate preference. It seems probable that ATP makes the enzyme reduce CDP and UDP, dGTP favors ADP reduction and dTTP favors GDP reduction. Stimulated by ATP and inhibited by dATP binding to the activity site, the dATP inhibition is mediated by AHCYL1 which stabilizes dATP in the site. In terms of biological role, provides the precursors necessary for DNA synthesis. Catalyzes the biosynthesis of deoxyribonucleotides from the corresponding ribonucleotides. The polypeptide is Ribonucleoside-diphosphate reductase large subunit (RRM1) (Homo sapiens (Human)).